Reading from the N-terminus, the 411-residue chain is Arginine deiminase 1 (411 aa).

The Amidino-cysteine intermediate role is filled by Cys401.

It belongs to the arginine deiminase family.

It is found in the cytoplasm. It catalyses the reaction L-arginine + H2O = L-citrulline + NH4(+). It functions in the pathway amino-acid degradation; L-arginine degradation via ADI pathway; carbamoyl phosphate from L-arginine: step 1/2. The chain is Arginine deiminase 1 (arcA1) from Staphylococcus epidermidis (strain ATCC 12228 / FDA PCI 1200).